A 387-amino-acid chain; its full sequence is METSMACCSRSIVLPRVSPQHSSALVPSSINLKSLKSSSLFGESLRMTTKSSVRVNKAKNSSLVTKCELGDSLEEFLAKATTDKGLIRLMMCMGEALRTIGFKVRTASCGGTQCVNTFGDEQLAIDVLADKLLFEALNYSHFCKYACSEELPELQDMGGPVDGGFSVAFDPLDGSSIVDTNFSVGTIFGVWPGDKLTGVTGRDQVAAAMGIYGPRTTYVLALKDYPGTHEFLLLDEGKWQHVKETTEINEGKLFCPGNLRATSDNADYAKLIQYYIKEKYTLRYTGGMVPDVNQIIVKEKGIFTNVISPTAKAKLRLLFEVAPLGFLIEKAGGHSSEGTKSVLDIEVKNLDDRTQVAYGSLNEIIRFEKTLYGSSRLEEPVPVGAAA.

Cysteine 109 and cysteine 114 are disulfide-bonded. Aspartate 120, glutamate 149, aspartate 170, leucine 172, and aspartate 173 together coordinate Mg(2+). Substrate-binding positions include 173-176, tyrosine 284, and lysine 314; that span reads DGSS. A Mg(2+)-binding site is contributed by glutamate 320.

The protein belongs to the FBPase class 1 family. In terms of assembly, homodimer. The cofactor is Mg(2+).

It is found in the plastid. Its subcellular location is the chloroplast. It carries out the reaction D-sedoheptulose 1,7-bisphosphate + H2O = D-sedoheptulose 7-phosphate + phosphate. It participates in carbohydrate biosynthesis; Calvin cycle. This is Sedoheptulose-1,7-bisphosphatase, chloroplastic from Spinacia oleracea (Spinach).